The sequence spans 650 residues: MATARLGVMRPPRSCALIFLCAFSMATAPTNATAHRRAGTVKSTPPPEDKGNYTAKYYDKNIYFNIYEGRNSTPRRRTLWEIISKFSTSEMLSLKRVKAFVPVDDNPTTTLEDIADILNYAVCDDNSCGCTIETQARIMFGDIIICVPLSADNKGVRNFKDRIMPKGLSQILSSSLGLHLSLLYGAFGSNYNSLAYMRRLKPLTAMTAIAFCPMTTKLELRQNYKVKETLCELIVSIEILKIRNNGGQTMKTLTSFAIVRKDNDGQDWETCTRFAPVNIEDILRYKRAANDTCCRHRDVQHGRRTLESSNSWTQTQYFEPWQDIVDVYVPINDTHCPNDSYVVFETLQGFEWCSRLNKNETKNYLSSVLGFRNALFETEELMETIAMRLASQILSMVGQQGTTIRDIDPAIVSALWHSLPENLTTTNIKYDIASPTHMAPALCTIFVQTGTSKERFRNAGLLMVNNIFTVQGRYTTQNMFERKEYVYKHLGQALCQDGEILFQNEGQKFCRPLTDNRTIVYTMQDQVQKPLSVTWMDFNLVISDYGRDVINNLTKSAMLARKNGPRYLQMENGPRYLQMETFISDLFRHECYQDNYYVLDKKLQMFYPTTHSNELLFIPRKLRCPHLGRNLRFPHLGRNLRFPHVGIGSY.

Residues 1–32 (MATARLGVMRPPRSCALIFLCAFSMATAPTNA) form a helical; Signal-anchor for type II membrane protein membrane-spanning segment. Residues 33-650 (TAHRRAGTVK…RFPHVGIGSY (618 aa)) lie on the Virion surface side of the membrane. N-linked (GlcNAc...) asparagine; by host glycosylation is found at N52, N290, N332, N338, N359, N422, N516, and N552.

As to quaternary structure, associates with the gp82-gp105 complex. N-Glycosylated.

Its subcellular location is the virion membrane. This chain is Glycoprotein 105 (U96/U97/U98/U99/U100), found in Homo sapiens (Human).